The primary structure comprises 149 residues: Calmodulin-2 (149 aa).

N-acetylalanine is present on alanine 2. EF-hand domains are found at residues 8-43 (EQIA…LGQN), 44-79 (PTEA…KMKD), 81-116 (DSEE…LGEK), and 117-149 (LTDE…MLAK). Ca(2+) contacts are provided by aspartate 21, aspartate 23, aspartate 25, cysteine 27, glutamate 32, aspartate 57, aspartate 59, asparagine 61, threonine 63, glutamate 68, aspartate 94, aspartate 96, asparagine 98, tyrosine 100, and aspartate 105. At lysine 116 the chain carries N6,N6,N6-trimethyllysine. Ca(2+) contacts are provided by aspartate 130, aspartate 132, aspartate 134, glutamine 136, and glutamate 141.

It belongs to the calmodulin family.

Calmodulin mediates the control of a large number of enzymes, ion channels and other proteins by Ca(2+). Among the enzymes to be stimulated by the calmodulin-Ca(2+) complex are a number of protein kinases and phosphatases. The chain is Calmodulin-2 (CAM72) from Petunia hybrida (Petunia).